The chain runs to 884 residues: DNA replication licensing factor mcm2 (884 aa).

Polar residues predominate over residues 1–16 (MADSSESFNIATSPRT). Disordered regions lie at residues 1-61 (MADS…IGDA) and 120-151 (LYDS…EDEE). Positions 47–58 (PREEEEDGEELI) are enriched in acidic residues. Residues 314-340 (CNKCNFILGPFFQSQNQEVKPGSCPEC) form a C4-type zinc finger. Residues 458 to 664 (IGERIFASIA…VQDEMLARFV (207 aa)) enclose the MCM domain. 2 residues coordinate ADP: serine 515 and glutamine 516. Residues 640–643 (SRFD) carry the Arginine finger motif.

It belongs to the MCM family. As to quaternary structure, component of the mcm2-7 complex (RLF-M). The complex forms a toroidal hexameric ring with the proposed subunit order mcm2-mcm6-mcm4-mcm7-mcm3-mcm5. Component of the replisome complex. Component of the CMG helicase complex, composed of the mcm2-7 complex, the GINS complex and cdc45. May be in a phosphorylated state in the mitotic mcm complex. Phosphorylated in the interphase mcm complex. Phosphorylated by the cdc7-dbf4 and cdc7-dbf4b complexes.

Its subcellular location is the nucleus. The protein resides in the chromosome. It carries out the reaction ATP + H2O = ADP + phosphate + H(+). Its function is as follows. Acts as a component of the MCM2-7 complex (MCM complex) which is the replicative helicase essential for 'once per cell cycle' DNA replication initiation and elongation in eukaryotic cells. Core component of CDC45-MCM-GINS (CMG) helicase, the molecular machine that unwinds template DNA during replication, and around which the replisome is built. The active ATPase sites in the MCM2-7 ring are formed through the interaction surfaces of two neighboring subunits such that a critical structure of a conserved arginine finger motif is provided in trans relative to the ATP-binding site of the Walker A box of the adjacent subunit. The six ATPase active sites, however, are likely to contribute differentially to the complex helicase activity. Required for the entry in S phase and for cell division. The sequence is that of DNA replication licensing factor mcm2 from Xenopus tropicalis (Western clawed frog).